A 2250-amino-acid polypeptide reads, in one-letter code: DNA polymerase epsilon catalytic subunit A (2250 aa).

3 disordered regions span residues 1-63, 235-259, and 1990-2010; these read MPSR…GTAA, NGHG…DKEP, and PGTE…KAAS. Over residues 32 to 41 the composition is skewed to gly residues; the sequence is GGGGGGGGVA. Over residues 249 to 259 the composition is skewed to basic and acidic residues; sequence DDTKKKKDKEP. Polar residues predominate over residues 1990-2000; sequence PGTEATSTMNP. C2118, C2121, C2156, and C2159 together coordinate Zn(2+). The CysA-type zinc-finger motif lies at 2118–2159; the sequence is CKKCNAIRDVDLCRDPDRLPSVNPDSGEMLEPARKNWVCHKC. The [4Fe-4S] cluster site is built by C2190, C2193, C2205, and C2207. The short motif at 2190–2207 is the CysB motif element; it reads CLKCSQTKSDNLAATCKC.

The protein belongs to the DNA polymerase type-B family. In terms of assembly, heterotetramer. Consists of 4 subunits: POL2, DPB2, DPB3 and DPB4. [4Fe-4S] cluster serves as cofactor.

It localises to the nucleus. It catalyses the reaction DNA(n) + a 2'-deoxyribonucleoside 5'-triphosphate = DNA(n+1) + diphosphate. In terms of biological role, DNA polymerase II participates in chromosomal DNA replication. The sequence is that of DNA polymerase epsilon catalytic subunit A (POL2) from Cryptococcus neoformans var. neoformans serotype D (strain JEC21 / ATCC MYA-565) (Filobasidiella neoformans).